A 160-amino-acid polypeptide reads, in one-letter code: Small ribosomal subunit protein bS6 (160 aa).

Basic and acidic residues-rich tracts occupy residues 94–119 and 125–152; these read EEHEEGPSAMMRKADRDRERDDRGGR and RGDREGRGDREGGGFRGDRGPRRPREDA. Positions 94-160 are disordered; it reads EEHEEGPSAM…DADTAAASEE (67 aa).

This sequence belongs to the bacterial ribosomal protein bS6 family.

Binds together with bS18 to 16S ribosomal RNA. This is Small ribosomal subunit protein bS6 from Rhodopseudomonas palustris (strain BisB5).